Reading from the N-terminus, the 462-residue chain is Metal cation symporter ZIP14 (462 aa).

The first 16 residues, 1–16 (MPLLLLSALLPFSLMA), serve as a signal peptide directing secretion. Residues 17–138 (GPTPSTGKEL…PSPGEVWGYG (122 aa)) lie on the Extracellular side of the membrane. 4 N-linked (GlcNAc...) asparagine glycosylation sites follow: N42, N68, N83, and N119. The chain crosses the membrane as a helical span at residues 139-159 (FLCVTVISLCSLFGAGVVPFM). At 160–167 (KKACYKRL) the chain is on the cytoplasmic side. The helical transmembrane segment at 168 to 188 (LLFCIALAIGTLFSNALFQLI) threads the bilayer. Residues 189-201 (PEAFGFNPLEDSY) lie on the Extracellular side of the membrane. A helical membrane pass occupies residues 202–222 (VFTSSVIFGGFYLFFFTEKVL). Residues 223–322 (KMMLKQKHEH…SDGLHNFIDG (100 aa)) are Cytoplasmic-facing. The HHHGHXHX-motif motif lies at 230-237 (HEHGHSHY). The tract at residues 235 to 285 (SHYSADTSKRDAEEGVTEKLQNGDLDHMIPPPHGSESDLRGDEKAVQQQDL) is disordered. Basic and acidic residues-rich tracts occupy residues 241 to 251 (TSKRDAEEGVT) and 269 to 279 (SESDLRGDEKA). Residues 323–343 (LAIGASFTVSVFQGVSTSIAI) form a helical membrane-spanning segment. Residues 344 to 367 (LCEEFPHELGDFVILLNAGMSIPQ) are Extracellular-facing. An XEXPHE-motif motif is present at residues 346 to 351 (EEFPHE). A helical membrane pass occupies residues 368–388 (ALFFNFLSACCCYLGLAFGIL). Over 389 to 396 (AGSHFSSN) the chain is Cytoplasmic. Residues 397–417 (WIFALAGGMFLYIALSDMFPE) traverse the membrane as a helical segment. Topologically, residues 418-431 (MNEVSKEDEEGGRA) are extracellular. A helical transmembrane segment spans residues 432–452 (FSAFMIQNAGLLTGFAIMLLL). Residues 453–462 (TTFSGQIQLG) lie on the Cytoplasmic side of the membrane.

Belongs to the ZIP transporter (TC 2.A.5) family. In terms of assembly, homotrimer.

The protein resides in the cell membrane. It localises to the apical cell membrane. It is found in the basolateral cell membrane. The protein localises to the early endosome membrane. Its subcellular location is the late endosome membrane. The protein resides in the lysosome membrane. It carries out the reaction Zn(2+)(out) + 2 hydrogencarbonate(out) = Zn(2+)(in) + 2 hydrogencarbonate(in). The catalysed reaction is Mn(2+)(out) + 2 hydrogencarbonate(out) = Mn(2+)(in) + 2 hydrogencarbonate(in). It catalyses the reaction Fe(2+)(out) + 2 hydrogencarbonate(out) = Fe(2+)(in) + 2 hydrogencarbonate(in). The enzyme catalyses Cd(2+)(out) + 2 hydrogencarbonate(out) = Cd(2+)(in) + 2 hydrogencarbonate(in). Functionally, electroneutral transporter of the plasma membrane mediating the cellular uptake of the divalent metal cations zinc, manganese and iron that are important for tissue homeostasis, metabolism, development and immunity. Functions as an energy-dependent symporter, transporting through the membranes an electroneutral complex composed of a divalent metal cation and two bicarbonate anions. Beside these endogenous cellular substrates, can also import cadmium a non-essential metal which is cytotoxic and carcinogenic. This Xenopus tropicalis (Western clawed frog) protein is Metal cation symporter ZIP14.